Here is a 189-residue protein sequence, read N- to C-terminus: Potassium-transporting ATPase KdpC subunit (189 aa).

A helical membrane pass occupies residues 10–30 (ITLVFCVFFSVFYILILWLFA).

This sequence belongs to the KdpC family. As to quaternary structure, the system is composed of three essential subunits: KdpA, KdpB and KdpC.

The protein localises to the cell inner membrane. In terms of biological role, part of the high-affinity ATP-driven potassium transport (or Kdp) system, which catalyzes the hydrolysis of ATP coupled with the electrogenic transport of potassium into the cytoplasm. This subunit acts as a catalytic chaperone that increases the ATP-binding affinity of the ATP-hydrolyzing subunit KdpB by the formation of a transient KdpB/KdpC/ATP ternary complex. This chain is Potassium-transporting ATPase KdpC subunit, found in Bacteroides thetaiotaomicron (strain ATCC 29148 / DSM 2079 / JCM 5827 / CCUG 10774 / NCTC 10582 / VPI-5482 / E50).